The sequence spans 105 residues: Thioredoxin (105 aa).

Positions 1–105 constitute a Thioredoxin domain; it reads VQVISSYDQF…LQAAITQHSA (105 aa). Catalysis depends on nucleophile residues Cys29 and Cys32. Residues Cys29 and Cys32 are joined by a disulfide bond.

It belongs to the thioredoxin family. As to quaternary structure, monomer.

In terms of biological role, participates in various redox reactions through the reversible oxidation of its active center dithiol to a disulfide and catalyzes dithiol-disulfide exchange reactions. The protein is Thioredoxin of Malassezia sympodialis (Atopic eczema-associated yeast).